The sequence spans 139 residues: D-ribose pyranase (139 aa).

His20 (proton donor) is an active-site residue. Residues Asp28, His106, and 128 to 130 (YAN) each bind substrate.

Belongs to the RbsD / FucU family. RbsD subfamily. As to quaternary structure, homodecamer.

It localises to the cytoplasm. The enzyme catalyses beta-D-ribopyranose = beta-D-ribofuranose. It functions in the pathway carbohydrate metabolism; D-ribose degradation; D-ribose 5-phosphate from beta-D-ribopyranose: step 1/2. Its function is as follows. Catalyzes the interconversion of beta-pyran and beta-furan forms of D-ribose. In Vibrio parahaemolyticus serotype O3:K6 (strain RIMD 2210633), this protein is D-ribose pyranase.